The sequence spans 254 residues: 5-oxoprolinase subunit A 1 (254 aa).

It belongs to the LamB/PxpA family. In terms of assembly, forms a complex composed of PxpA, PxpB and PxpC.

It catalyses the reaction 5-oxo-L-proline + ATP + 2 H2O = L-glutamate + ADP + phosphate + H(+). Catalyzes the cleavage of 5-oxoproline to form L-glutamate coupled to the hydrolysis of ATP to ADP and inorganic phosphate. This is 5-oxoprolinase subunit A 1 from Burkholderia pseudomallei (strain K96243).